Consider the following 89-residue polypeptide: U-scoloptoxin(11)-Sm4a (89 aa).

The N-terminal stretch at 1–17 (MFFKLVLVSAVAIQALS) is a signal peptide.

This sequence belongs to the scoloptoxin-11 family. In terms of processing, contains 3 disulfide bonds. In terms of tissue distribution, expressed by the venom gland.

It is found in the secreted. This is U-scoloptoxin(11)-Sm4a from Scolopendra morsitans (Tanzanian blue ringleg centipede).